The primary structure comprises 82 residues: ATP synthase subunit c, chloroplastic (82 aa).

Helical transmembrane passes span 3 to 23 (PIIS…AAIG) and 57 to 77 (LAFM…LLFA).

This sequence belongs to the ATPase C chain family. As to quaternary structure, F-type ATPases have 2 components, F(1) - the catalytic core - and F(0) - the membrane proton channel. F(1) has five subunits: alpha(3), beta(3), gamma(1), delta(1), epsilon(1). F(0) has four main subunits: a(1), b(1), b'(1) and c(10-14). The alpha and beta chains form an alternating ring which encloses part of the gamma chain. F(1) is attached to F(0) by a central stalk formed by the gamma and epsilon chains, while a peripheral stalk is formed by the delta, b and b' chains.

The protein resides in the plastid. The protein localises to the chloroplast thylakoid membrane. Its function is as follows. F(1)F(0) ATP synthase produces ATP from ADP in the presence of a proton or sodium gradient. F-type ATPases consist of two structural domains, F(1) containing the extramembraneous catalytic core and F(0) containing the membrane proton channel, linked together by a central stalk and a peripheral stalk. During catalysis, ATP synthesis in the catalytic domain of F(1) is coupled via a rotary mechanism of the central stalk subunits to proton translocation. Functionally, key component of the F(0) channel; it plays a direct role in translocation across the membrane. A homomeric c-ring of between 10-14 subunits forms the central stalk rotor element with the F(1) delta and epsilon subunits. This Phaeodactylum tricornutum (strain CCAP 1055/1) protein is ATP synthase subunit c, chloroplastic.